The chain runs to 294 residues: Transcription repressor OFP14 (294 aa).

Residues 49–60 (SFKHRRRSSKTR) are compositionally biased toward basic residues. Disordered regions lie at residues 49–72 (SFKH…HQDS), 96–129 (DDQE…DDDD), and 141–185 (AVYD…SRST). Basic and acidic residues-rich tracts occupy residues 61–72 (FSKEEPVYHQDS) and 96–117 (DDQE…RESS). Residues 118 to 128 (SDDSDDDDDDD) are compositionally biased toward acidic residues. Residues 164–185 (SSEGRPSMETTSTSSERQSRST) show a composition bias toward low complexity. Residues 195–259 (VLRYTDEPQE…LSAFVDLIIA (65 aa)) form the OVATE domain.

In terms of assembly, interacts with KNAT2 and KNAT3. In terms of tissue distribution, expressed in roots, rosette and cauline leaves, shoots, stems, flower buds and siliques.

It localises to the nucleus. Functionally, transcriptional repressor that may regulate multiple aspects of plant growth and development through the regulation of BEL1-LIKE (BLH) and KNOX TALE (KNAT) homeodomain transcription factors. The polypeptide is Transcription repressor OFP14 (OFP14) (Arabidopsis thaliana (Mouse-ear cress)).